A 186-amino-acid chain; its full sequence is ATP-dependent protease subunit HslV (186 aa).

The active site involves T13. Positions 167, 170, and 173 each coordinate Na(+).

This sequence belongs to the peptidase T1B family. HslV subfamily. A double ring-shaped homohexamer of HslV is capped on each side by a ring-shaped HslU homohexamer. The assembly of the HslU/HslV complex is dependent on binding of ATP.

The protein localises to the cytoplasm. The enzyme catalyses ATP-dependent cleavage of peptide bonds with broad specificity.. With respect to regulation, allosterically activated by HslU binding. In terms of biological role, protease subunit of a proteasome-like degradation complex believed to be a general protein degrading machinery. This Allorhizobium ampelinum (strain ATCC BAA-846 / DSM 112012 / S4) (Agrobacterium vitis (strain S4)) protein is ATP-dependent protease subunit HslV.